A 431-amino-acid chain; its full sequence is UDP-N-acetylglucosamine 1-carboxyvinyltransferase (431 aa).

Residue 22–23 (KN) participates in phosphoenolpyruvate binding. Arg-102 lines the UDP-N-acetyl-alpha-D-glucosamine pocket. Residue Cys-126 is the Proton donor of the active site. Cys-126 is subject to 2-(S-cysteinyl)pyruvic acid O-phosphothioketal. UDP-N-acetyl-alpha-D-glucosamine-binding positions include 131–135 (RPVDL), Asp-316, and Ile-338.

Belongs to the EPSP synthase family. MurA subfamily.

The protein localises to the cytoplasm. It catalyses the reaction phosphoenolpyruvate + UDP-N-acetyl-alpha-D-glucosamine = UDP-N-acetyl-3-O-(1-carboxyvinyl)-alpha-D-glucosamine + phosphate. It functions in the pathway cell wall biogenesis; peptidoglycan biosynthesis. Cell wall formation. Adds enolpyruvyl to UDP-N-acetylglucosamine. The chain is UDP-N-acetylglucosamine 1-carboxyvinyltransferase from Beijerinckia indica subsp. indica (strain ATCC 9039 / DSM 1715 / NCIMB 8712).